Consider the following 129-residue polypeptide: Large ribosomal subunit protein uL14m (129 aa).

The protein belongs to the universal ribosomal protein uL14 family.

The protein resides in the mitochondrion. The sequence is that of Large ribosomal subunit protein uL14m (RPL14) from Acanthamoeba castellanii (Amoeba).